The primary structure comprises 92 residues: Large ribosomal subunit protein eL31 (92 aa).

Belongs to the eukaryotic ribosomal protein eL31 family.

This chain is Large ribosomal subunit protein eL31, found in Halobacterium salinarum (strain ATCC 29341 / DSM 671 / R1).